A 134-amino-acid polypeptide reads, in one-letter code: Small ribosomal subunit protein uS11 (134 aa).

Residues 114–134 (TPVPHNGTRPPRKWFKRQEKR) form a disordered region. The span at 123-134 (PPRKWFKRQEKR) shows a compositional bias: basic residues.

The protein belongs to the universal ribosomal protein uS11 family. In terms of assembly, part of the 30S ribosomal subunit. Interacts with proteins S7 and S18. Binds to IF-3.

Its function is as follows. Located on the platform of the 30S subunit, it bridges several disparate RNA helices of the 16S rRNA. Forms part of the Shine-Dalgarno cleft in the 70S ribosome. In Mesomycoplasma hyopneumoniae (strain 232) (Mycoplasma hyopneumoniae), this protein is Small ribosomal subunit protein uS11.